Consider the following 439-residue polypeptide: Putative myrosinase 3 (439 aa).

Positions 1 to 19 are cleaved as a signal peptide; that stretch reads MKFRALGLVLLLAVETCKA. Asn33 carries N-linked (GlcNAc...) asparagine glycosylation. Residues His145, 190–191, and Tyr316 contribute to the a beta-D-glucoside site; that span reads NQ. Asn336 is a glycosylation site (N-linked (GlcNAc...) asparagine). Residues Glu386 and Trp404 each contribute to the a beta-D-glucoside site. The Nucleophile role is filled by Glu386.

The protein belongs to the glycosyl hydrolase 1 family. In terms of tissue distribution, expressed specifically in stamens and petals.

The catalysed reaction is a thioglucoside + H2O = a sugar + a thiol.. The sequence is that of Putative myrosinase 3 from Arabidopsis thaliana (Mouse-ear cress).